The sequence spans 331 residues: Cytosolic arginine sensor for mTORC1 subunit 1 (331 aa).

S14 is modified (phosphoserine). Residues 72–139 enclose the ACT 1 domain; sequence AEATWLVMNV…SVVIHTLARE (68 aa). Residue 110-111 participates in L-arginine binding; the sequence is SV. The disordered stretch occupies residues 155–174; the sequence is GDDSSNGFPQAQHGPSPTVH. Residues 156-174 are compositionally biased toward polar residues; sequence DDSSNGFPQAQHGPSPTVH. Positions 262–322 constitute an ACT 2 domain; sequence WRMVRIGGQP…SCVIDILQRR (61 aa). L-arginine is bound by residues G273, 279 to 280, and 299 to 303; these read IV and TFNFD.

The protein belongs to the GATS family. Forms homodimers and heterodimers with CASTOR2. Interacts with the GATOR2 complex which is composed of MIOS, SEC13, SEH1L, WDR24 and WDR59; the interaction is negatively regulated by arginine. Interacts with TM4SF5; the interaction is positively regulated by leucine and is negatively regulated by arginine. In terms of processing, phosphorylation at Ser-14 by AKT1, promoting the interaction between CASTOR1 and RNF167. Ubiquitinated by RNF167 via 'Lys-29'-polyubiquitination, leading to its degradation, releasing the GATOR2 complex. Ubiquitination by RNF167 is promoted by phosphorylation at Ser-14 by AKT1.

It is found in the cytoplasm. The protein resides in the cytosol. Functions as an intracellular arginine sensor within the amino acid-sensing branch of the TORC1 signaling pathway. As a homodimer or a heterodimer with CASTOR2, binds and inhibits the GATOR subcomplex GATOR2 and thereby mTORC1. Binding of arginine to CASTOR1 allosterically disrupts the interaction of CASTOR1-containing dimers with GATOR2 which can in turn activate mTORC1 and the TORC1 signaling pathway. The sequence is that of Cytosolic arginine sensor for mTORC1 subunit 1 from Rattus norvegicus (Rat).